We begin with the raw amino-acid sequence, 1041 residues long: MPRSRDEDDELDGDYEALDLEEEEEEDEEEEEERGRGGGGSRRKRGRSNFIDDYAEEDSQEEDDDDEDYGSSRGGKGAASKRKKPSASIFLDREAHQVDDEDEEEEDEAEDDFIVDNGTDLPDERGDRRYERRFLPRDENDEDVEDLERRIQERFSSRHHEEYDEEATEVEQQALLPSVRDPKLWMVKCAIGREREVAVCLMQKFIDRGADLQIRSVVALDHLKNFIYVEADKEAHVKEAIKGMRNIYANQKILLVPIREMTDVLSVESKAIDLSRDTWVRMKIGTYKGDLAKVVDVDNVRQRVTVKLIPRIDLQALASKLDGREVSKKKAFVPPPRFMNIDEARELHIRVERRRDHMTGDYFENIGGMLFKDGFHYKQVSLKSITVQNVTPTFDELEKFNKPSENGEGDFGGLSTLFANRKKGHFMKGDAVIVIKGDLKNLKGWVEKVDEENVLIRSEVKGLPDPLAVNERELCKYFEPGNHVKVVSGTHEGATGMVVKVDQHVLIILSDTTKEHVRVFADHVVESSEVTTGVTKIGDYELHDLVLLDNLSFGVIIRLENEAFQVLKGVPDRPEVALVKLREIKCKLEKKINVQDRYKNVIAVKDDVRVIEGPSKGKQGPVKHIYKGVLFIYDRHHLEHAGFICAKCTSCIVVGGSRSGANRNGGDSLSRYGNFKAPAPVPSSPGRFQRGRGGGYNNSGGRHGGGRGRGDDSLLGTTVKIRLGPFKGYRGPVVEVKGNSVRVELEMKIVTVDRGAISDNVATTPFRDTSRYSMGSETPMHPSRTPLHPYMTPMRDSGATPIHDGMRTPMRDRAWNPYTPMSPPRDNWEDGNPGSWGTSPQYQPGSPPSRAYEAPTPGSGWASTPGGSYSDAGTPRDHGSAYANAPSPYLPSTPGQPMTPSSASYLPGTPGGQPMTPGTGLDVMSPVIGGDAEAWFMPDILVDIHKAGEDTDVGVIRDVSDGTCKVSLGSSGEGDTIMALPSELEIIPPRKSDRVKIVGGQYRGSTGKLIGIDGSDGIVKIDDNLDVKILDLALLAKFVQP.

The interval 1 to 133 is disordered; sequence MPRSRDEDDE…ERGDRRYERR (133 aa). 3 stretches are compositionally biased toward acidic residues: residues 7-32, 53-69, and 99-114; these read EDDE…EEEE, DYAE…DEDY, and DDED…DDFI. S59 bears the Phosphoserine mark. Residues 122 to 133 show a composition bias toward basic and acidic residues; the sequence is PDERGDRRYERR. KOW domains lie at 273 to 300, 425 to 452, 477 to 504, and 601 to 628; these read DLSR…VDNV, HFMK…VDEE, YFEP…VDQH, and VIAV…IYKG. 2 disordered regions span residues 662 to 713 and 768 to 921; these read NRNG…GDDS and DTSR…GTGL. Over residues 691–703 the composition is skewed to gly residues; it reads GRGGGYNNSGGRH. Residues 712–739 form the KOW 5 domain; it reads DSLLGTTVKIRLGPFKGYRGPVVEVKGN. Positions 804–814 are enriched in basic and acidic residues; that stretch reads DGMRTPMRDRA. 2 stretches are compositionally biased toward polar residues: residues 835 to 844 and 893 to 904; these read SWGTSPQYQP and TPGQPMTPSSAS. The 28-residue stretch at 988 to 1015 folds into the KOW 6 domain; that stretch reads PPRKSDRVKIVGGQYRGSTGKLIGIDGS.

The protein belongs to the SPT5 family.

The protein resides in the nucleus. In terms of biological role, may regulate transcription elongation by RNA polymerase II. May enhance transcriptional pausing at sites proximal to the promoter, which may in turn facilitate the assembly of an elongation competent RNA polymerase II complex. This Arabidopsis thaliana (Mouse-ear cress) protein is Putative transcription elongation factor SPT5 homolog 1.